A 171-amino-acid polypeptide reads, in one-letter code: Phosphopantetheine adenylyltransferase (171 aa).

Residue Thr9 coordinates substrate. ATP contacts are provided by residues 9 to 10 (TF) and His17. Residues Lys41, Leu78, and Arg92 each contribute to the substrate site. ATP-binding positions include 93–95 (GLR), Glu103, and 128–134 (HQAIASK).

The protein belongs to the bacterial CoaD family. In terms of assembly, homohexamer. The cofactor is Mg(2+).

Its subcellular location is the cytoplasm. The catalysed reaction is (R)-4'-phosphopantetheine + ATP + H(+) = 3'-dephospho-CoA + diphosphate. It functions in the pathway cofactor biosynthesis; coenzyme A biosynthesis; CoA from (R)-pantothenate: step 4/5. Reversibly transfers an adenylyl group from ATP to 4'-phosphopantetheine, yielding dephospho-CoA (dPCoA) and pyrophosphate. This is Phosphopantetheine adenylyltransferase from Dinoroseobacter shibae (strain DSM 16493 / NCIMB 14021 / DFL 12).